A 1846-amino-acid polypeptide reads, in one-letter code: Brefeldin A-inhibited guanine nucleotide-exchange protein 1 (1846 aa).

The DCB; DCB:DCB domain and DCB:HUS domain interaction stretch occupies residues 2–224 (YEGKKTKNMF…QEAKQMERER (223 aa)). Residue S52 is modified to Phosphoserine. Disordered regions lie at residues 216–249 (EAKQ…LRYL), 264–304 (DLEP…ATAA), and 347–410 (ISAS…SPGA). Residues 264 to 277 (DLEPQTHDVDKSLQ) show a composition bias toward basic and acidic residues. Phosphoserine is present on residues S286, S289, and S290. Polar residues-rich tracts occupy residues 348–357 (SASTEGNTGT) and 391–406 (SVSS…SSGP). S394 and S407 each carry phosphoserine. An HUS; DCB:HUS domain interaction region spans residues 554–574 (ADAQSVVDIYVNYDCDLNAAN). The tract at residues 631–684 (PNSQTTLGQEKPSEQEISEVKHPETINRYGSLNSLESTSSSGIGSYSTQMSGTD) is disordered. The segment covering 641-655 (KPSEQEISEVKHPET) has biased composition (basic and acidic residues). Low complexity predominate over residues 661 to 681 (SLNSLESTSSSGIGSYSTQMS). The region spanning 688 to 877 (QFEVLKQQKE…SAIYNEIAGK (190 aa)) is the SEC7 domain. The Nuclear localization signal (NLS) motif lies at 708–712 (KKPKR). 3 positions are modified to phosphoserine: S1076, S1563, and S1566.

As to quaternary structure, homodimer. Interacts with ARFGEF2/BIG2; both proteins are probably part of the same or very similar macromolecular complexes. Interacts with FKBP2. Interacts with MYO9B. Interacts with PRKAR1A and PRKAR2A. Interacts with PPP1CC. Interacts with NCL, FBL, NUP62 and U3 small nucleolar RNA. Interacts with DPY30. Interacts with PDE3A. Interacts with KANK1. Interacts with TBC1D22A and TBC1D22B. In terms of processing, phosphorylated. In vitro phosphorylated by PKA reducing its GEF activity and dephosphorylated by phosphatase PP1.

The protein resides in the cytoplasm. It localises to the perinuclear region. It is found in the golgi apparatus. The protein localises to the trans-Golgi network. Its subcellular location is the nucleus. The protein resides in the nucleolus. It localises to the nucleus matrix. It is found in the membrane. With respect to regulation, inhibited by brefeldin A. Its function is as follows. Promotes guanine-nucleotide exchange on ARF1 and ARF3. Promotes the activation of ARF1/ARF3 through replacement of GDP with GTP. Involved in vesicular trafficking. Required for the maintenance of Golgi structure; the function may be independent of its GEF activity. Required for the maturation of integrin beta-1 in the Golgi. Involved in the establishment and persistence of cell polarity during directed cell movement in wound healing. Proposed to act as A kinase-anchoring protein (AKAP) and may mediate crosstalk between Arf and PKA pathways. Inhibits GAP activity of MYO9B probably through competitive RhoA binding. The function in the nucleus remains to be determined. This chain is Brefeldin A-inhibited guanine nucleotide-exchange protein 1 (Arfgef1), found in Mus musculus (Mouse).